Here is a 564-residue protein sequence, read N- to C-terminus: 60 kDa lysophospholipase (564 aa).

The Asparaginase/glutaminase domain occupies 9–355 (RRLLAIYTGG…NDRKKLLAKD (347 aa)). Thr-19 acts as the Acyl-ester intermediate in catalysis. The asparaginase stretch occupies residues 41-350 (TLHMFHDEEY…PGLSLNDRKK (310 aa)). Residues 84-86 (DSS) and 116-117 (TD) each bind substrate. 5 ANK repeats span residues 141–170 (GAQV…YVIP), 396–426 (VLLP…DLNL), 430–459 (SGQT…DVDA), 463–492 (DGQS…RLSP), and 530–559 (DGHC…SVCA). Ser-478 is subject to Phosphoserine.

The protein in the N-terminal section; belongs to the asparaginase 1 family. Monomer.

It carries out the reaction a 1-acyl-sn-glycero-3-phosphocholine + H2O = sn-glycerol 3-phosphocholine + a fatty acid + H(+). The catalysed reaction is L-asparagine + H2O = L-aspartate + NH4(+). The enzyme catalyses a 1-O-alkyl-2-acetyl-sn-glycero-3-phosphocholine + H2O = a 1-O-alkyl-sn-glycero-3-phosphocholine + acetate + H(+). It catalyses the reaction 1-hexadecanoyl-sn-glycero-3-phosphocholine + H2O = sn-glycerol 3-phosphocholine + hexadecanoate + H(+). It carries out the reaction 2 1-hexadecanoyl-sn-glycero-3-phosphocholine = 1,2-dihexadecanoyl-sn-glycero-3-phosphocholine + sn-glycerol 3-phosphocholine. The catalysed reaction is 1-octadecanoyl-sn-glycero-3-phosphocholine + H2O = octadecanoate + sn-glycerol 3-phosphocholine + H(+). The enzyme catalyses 1-(9Z-octadecenoyl)-sn-glycero-3-phosphocholine + H2O = sn-glycerol 3-phosphocholine + (9Z)-octadecenoate + H(+). It catalyses the reaction 1-hexadecanoyl-sn-glycero-3-phosphoethanolamine + H2O = sn-glycero-3-phosphoethanolamine + hexadecanoate + H(+). It carries out the reaction 1-(9Z-octadecenoyl)-sn-glycero-3-phosphoethanolamine + H2O = sn-glycero-3-phosphoethanolamine + (9Z)-octadecenoate + H(+). The catalysed reaction is 1-hexadecanoyl-sn-glycero-3-phosphoethanolamine + 1-hexadecanoyl-sn-glycero-3-phosphocholine = 1,2-dihexadecanoyl-sn-glycero-3-phosphoethanolamine + sn-glycerol 3-phosphocholine. The enzyme catalyses 2-(5Z,8Z,11Z,14Z)-eicosatetraenoyl-sn-glycero-3-phosphocholine + H2O = sn-glycerol 3-phosphocholine + (5Z,8Z,11Z,14Z)-eicosatetraenoate + H(+). It catalyses the reaction 2-hexadecanoyl-sn-glycero-3-phosphocholine + H2O = sn-glycerol 3-phosphocholine + hexadecanoate + H(+). It carries out the reaction 2 2-hexadecanoyl-sn-glycero-3-phosphocholine = 1,2-dihexadecanoyl-sn-glycero-3-phosphocholine + sn-glycerol 3-phosphocholine. The catalysed reaction is 1-O-(9Z)-octadecenoyl-2-O-acetyl-sn-glycero-3-phosphocholine + H2O = 2-acetyl-sn-glycero-3-phosphocholine + (9Z)-octadecenoate + H(+). The enzyme catalyses a 1-acyl-sn-glycero-3-phospho-(1D-myo-inositol) + 1-hexadecanoyl-sn-glycero-3-phosphocholine = a 1-acyl-2-hexadecanoyl-sn-glycero-3-phospho-(1D-myo-inositol) + sn-glycerol 3-phosphocholine. It catalyses the reaction 2 2-(5Z,8Z,11Z,14Z)-eicosatetraenoyl-sn-glycero-3-phosphocholine = 1,2-di-(5Z,8Z,11Z,14Z-eicosatetraenoyl)-sn-glycero-3-phosphocholine + sn-glycerol 3-phosphocholine. In terms of biological role, exhibits lysophospholipase, transacylase, PAF acetylhydrolase and asparaginase activities. Can catalyze three types of transacylation reactions: (1) acyl transfer from 1-acyl-sn-glycero-3-phosphocholine (1-acyl-GPC) to the sn-1(3) positions of glycerol and 2-acylglycerol (sn-1 to -1(3) transfer), (2) acyl transfer from 1-acyl-GPC to the sn-2 positions of 1-acyl-GPC, 1-acyl-sn-glycero-3-phosphoethanolamine (1-acyl-GPE), and other lysophospholipids (sn-1 to -2 transfer) and (3) acyl transfer from 2-acyl-GPC to the sn-1 position of 2-acyl-GPC and 2-acyl-GPE (sn-2 to -1 transfer). Mediates the synthesis of 1-arachidonoyl species of phospholipids by transferring the arachidonoyl residue from 2-arachidonoyl lysophospholipid to the sn-1 position of 2-acyl lysophospholipid. This is 60 kDa lysophospholipase (Aspg) from Mus musculus (Mouse).